Reading from the N-terminus, the 351-residue chain is 1-aminocyclopropane-1-carboxylate oxidase homolog 4 (351 aa).

One can recognise a Fe2OG dioxygenase domain in the interval 200-304 (KSQYMVGQHY…AIVFSTFMRA (105 aa)). 3 residues coordinate Fe cation: histidine 224, aspartate 226, and histidine 280. Arginine 291 is a 2-oxoglutarate binding site.

It belongs to the iron/ascorbate-dependent oxidoreductase family. Requires Fe(2+) as cofactor.

This Arabidopsis thaliana (Mouse-ear cress) protein is 1-aminocyclopropane-1-carboxylate oxidase homolog 4.